The chain runs to 456 residues: Bifunctional protein GlmU (456 aa).

The interval 1 to 230 (MDKRFAVILA…FQETLGVNDR (230 aa)) is pyrophosphorylase. UDP-N-acetyl-alpha-D-glucosamine-binding positions include 9 to 12 (LAAG), Lys23, Gln73, and 78 to 79 (GT). Asp103 contributes to the Mg(2+) binding site. 4 residues coordinate UDP-N-acetyl-alpha-D-glucosamine: Gly140, Glu155, Asn170, and Asn228. Residue Asn228 participates in Mg(2+) binding. The linker stretch occupies residues 231 to 251 (VALSQAEMYMKERINKRHMQN). The interval 252-456 (GVTLIDPMNT…EDYVKNIHKK (205 aa)) is N-acetyltransferase. The UDP-N-acetyl-alpha-D-glucosamine site is built by Arg333 and Lys351. The active-site Proton acceptor is His363. The UDP-N-acetyl-alpha-D-glucosamine site is built by Tyr366 and Asn377. Residues 386 to 387 (NY), Ala423, and Arg440 contribute to the acetyl-CoA site.

This sequence in the N-terminal section; belongs to the N-acetylglucosamine-1-phosphate uridyltransferase family. It in the C-terminal section; belongs to the transferase hexapeptide repeat family. As to quaternary structure, homotrimer. Requires Mg(2+) as cofactor.

The protein localises to the cytoplasm. The catalysed reaction is alpha-D-glucosamine 1-phosphate + acetyl-CoA = N-acetyl-alpha-D-glucosamine 1-phosphate + CoA + H(+). The enzyme catalyses N-acetyl-alpha-D-glucosamine 1-phosphate + UTP + H(+) = UDP-N-acetyl-alpha-D-glucosamine + diphosphate. It participates in nucleotide-sugar biosynthesis; UDP-N-acetyl-alpha-D-glucosamine biosynthesis; N-acetyl-alpha-D-glucosamine 1-phosphate from alpha-D-glucosamine 6-phosphate (route II): step 2/2. It functions in the pathway nucleotide-sugar biosynthesis; UDP-N-acetyl-alpha-D-glucosamine biosynthesis; UDP-N-acetyl-alpha-D-glucosamine from N-acetyl-alpha-D-glucosamine 1-phosphate: step 1/1. The protein operates within bacterial outer membrane biogenesis; LPS lipid A biosynthesis. Its function is as follows. Catalyzes the last two sequential reactions in the de novo biosynthetic pathway for UDP-N-acetylglucosamine (UDP-GlcNAc). The C-terminal domain catalyzes the transfer of acetyl group from acetyl coenzyme A to glucosamine-1-phosphate (GlcN-1-P) to produce N-acetylglucosamine-1-phosphate (GlcNAc-1-P), which is converted into UDP-GlcNAc by the transfer of uridine 5-monophosphate (from uridine 5-triphosphate), a reaction catalyzed by the N-terminal domain. In Bacillus velezensis (strain DSM 23117 / BGSC 10A6 / LMG 26770 / FZB42) (Bacillus amyloliquefaciens subsp. plantarum), this protein is Bifunctional protein GlmU.